Consider the following 552-residue polypeptide: Hydroxylamine reductase (552 aa).

Cys-5, Cys-8, Cys-20, and Cys-27 together coordinate [2Fe-2S] cluster. The hybrid [4Fe-2O-2S] cluster site is built by His-251, Glu-275, Cys-319, Cys-407, Cys-435, Cys-460, Glu-494, and Lys-496. A Cysteine persulfide modification is found at Cys-407.

It belongs to the HCP family. [2Fe-2S] cluster is required as a cofactor. The cofactor is hybrid [4Fe-2O-2S] cluster.

It localises to the cytoplasm. It catalyses the reaction A + NH4(+) + H2O = hydroxylamine + AH2 + H(+). In terms of biological role, catalyzes the reduction of hydroxylamine to form NH(3) and H(2)O. In Shigella sonnei (strain Ss046), this protein is Hydroxylamine reductase.